We begin with the raw amino-acid sequence, 304 residues long: N-acetyl-D-glucosamine kinase (304 aa).

Residues Gly4 to Lys11 and Gly133 to Phe140 contribute to the ATP site. Zn(2+)-binding residues include His157, Cys178, Cys180, and Cys185.

It belongs to the ROK (NagC/XylR) family. NagK subfamily.

The enzyme catalyses N-acetyl-D-glucosamine + ATP = N-acetyl-D-glucosamine 6-phosphate + ADP + H(+). It functions in the pathway cell wall biogenesis; peptidoglycan recycling. Functionally, catalyzes the phosphorylation of N-acetyl-D-glucosamine (GlcNAc) derived from cell-wall degradation, yielding GlcNAc-6-P. The chain is N-acetyl-D-glucosamine kinase from Pasteurella multocida (strain Pm70).